The sequence spans 235 residues: MFKLTEKGEKIQEMFDTIAPRYDFLNRLLSFGIDRKWRRFAVKQIRYAEGGRILDVATGTGDVALEIAAQTPASISIVGVDFSKEMVELGKEKVNCSPFAARISMQVAPCEAIPFADGSFDSVTIAFGIRNVVDRAQGLKEMHRILKADGRAVILEFSTPRLTLFKALYHFYFLKVLPVIGGLFSQFSAYKYLPDSVMEFPSQEEFKAIMAGVGFKNLKHFDLTGGIATVYVGEK.

2 residues coordinate S-adenosyl-L-methionine: threonine 60 and aspartate 81.

The protein belongs to the class I-like SAM-binding methyltransferase superfamily. MenG/UbiE family.

It carries out the reaction a 2-demethylmenaquinol + S-adenosyl-L-methionine = a menaquinol + S-adenosyl-L-homocysteine + H(+). The catalysed reaction is a 2-methoxy-6-(all-trans-polyprenyl)benzene-1,4-diol + S-adenosyl-L-methionine = a 5-methoxy-2-methyl-3-(all-trans-polyprenyl)benzene-1,4-diol + S-adenosyl-L-homocysteine + H(+). It functions in the pathway quinol/quinone metabolism; menaquinone biosynthesis; menaquinol from 1,4-dihydroxy-2-naphthoate: step 2/2. It participates in cofactor biosynthesis; ubiquinone biosynthesis. Functionally, methyltransferase required for the conversion of demethylmenaquinol (DMKH2) to menaquinol (MKH2) and the conversion of 2-polyprenyl-6-methoxy-1,4-benzoquinol (DDMQH2) to 2-polyprenyl-3-methyl-6-methoxy-1,4-benzoquinol (DMQH2). The chain is Ubiquinone/menaquinone biosynthesis C-methyltransferase UbiE from Geotalea uraniireducens (strain Rf4) (Geobacter uraniireducens).